Here is a 67-residue protein sequence, read N- to C-terminus: DNA-directed RNA polymerase subunit omega (67 aa).

This sequence belongs to the RNA polymerase subunit omega family. As to quaternary structure, the RNAP catalytic core consists of 2 alpha, 1 beta, 1 beta' and 1 omega subunit. When a sigma factor is associated with the core the holoenzyme is formed, which can initiate transcription.

It catalyses the reaction RNA(n) + a ribonucleoside 5'-triphosphate = RNA(n+1) + diphosphate. Promotes RNA polymerase assembly. Latches the N- and C-terminal regions of the beta' subunit thereby facilitating its interaction with the beta and alpha subunits. This chain is DNA-directed RNA polymerase subunit omega, found in Polynucleobacter asymbioticus (strain DSM 18221 / CIP 109841 / QLW-P1DMWA-1) (Polynucleobacter necessarius subsp. asymbioticus).